Consider the following 165-residue polypeptide: Putative pre-16S rRNA nuclease (165 aa).

Belongs to the YqgF nuclease family.

The protein resides in the cytoplasm. Its function is as follows. Could be a nuclease involved in processing of the 5'-end of pre-16S rRNA. The chain is Putative pre-16S rRNA nuclease from Beijerinckia indica subsp. indica (strain ATCC 9039 / DSM 1715 / NCIMB 8712).